A 185-amino-acid polypeptide reads, in one-letter code: Casparian strip membrane protein 2 (185 aa).

The Cytoplasmic segment spans residues 1 to 25; that stretch reads MKAVSIEAGEGSKAKRVHGVNRGIS. A helical membrane pass occupies residues 26–46; the sequence is VFDLVLRIVALVGTLASAVAM. At 47–73 the chain is on the extracellular side; that stretch reads GTADQALSFSTQIVNFEAQYDDIDAFK. A helical membrane pass occupies residues 74 to 94; that stretch reads FFVVSNSITCVYLALSIPISI. At 95–106 the chain is on the cytoplasmic side; sequence FHIIRSRAGKSR. The helical transmembrane segment at 107 to 127 threads the bilayer; the sequence is VLLIVLDAIMLVFLTSGASAA. Over 128 to 160 the chain is Extracellular; that stretch reads AAIVYLAHNGNTSTNWFSICQQYTDFCQRSAGS. The N-linked (GlcNAc...) asparagine glycan is linked to N138. A helical membrane pass occupies residues 161 to 181; the sequence is LIGSFGAMALMVLLIILSSIA. Over 182–185 the chain is Cytoplasmic; the sequence is LSRR.

This sequence belongs to the Casparian strip membrane proteins (CASP) family. As to quaternary structure, homodimer and heterodimers.

Its subcellular location is the cell membrane. Regulates membrane-cell wall junctions and localized cell wall deposition. Required for establishment of the Casparian strip membrane domain (CSD) and the subsequent formation of Casparian strips, a cell wall modification of the root endodermis that determines an apoplastic barrier between the intraorganismal apoplasm and the extraorganismal apoplasm and prevents lateral diffusion. The polypeptide is Casparian strip membrane protein 2 (Solanum demissum (Wild potato)).